Consider the following 368-residue polypeptide: Cell division protein FtsZ 1 (368 aa).

GTP contacts are provided by residues 52–56, 139–141, glutamate 170, arginine 174, and aspartate 217; these read GGGCN and GTG.

This sequence belongs to the FtsZ family. As to quaternary structure, homodimer. Polymerizes to form a dynamic ring structure in a strictly GTP-dependent manner. Interacts directly with several other division proteins.

The protein resides in the cytoplasm. Essential cell division protein that forms a contractile ring structure (Z ring) at the future cell division site. The regulation of the ring assembly controls the timing and the location of cell division. One of the functions of the FtsZ ring is to recruit other cell division proteins to the septum to produce a new cell wall between the dividing cells. Binds GTP and shows GTPase activity. The chain is Cell division protein FtsZ 1 from Archaeoglobus fulgidus (strain ATCC 49558 / DSM 4304 / JCM 9628 / NBRC 100126 / VC-16).